The sequence spans 99 residues: Small ribosomal subunit protein uS14c (99 aa).

This sequence belongs to the universal ribosomal protein uS14 family. As to quaternary structure, part of the 30S ribosomal subunit.

The protein localises to the plastid. It localises to the chloroplast. Binds 16S rRNA, required for the assembly of 30S particles. The polypeptide is Small ribosomal subunit protein uS14c (Welwitschia mirabilis (Tree tumbo)).